The sequence spans 504 residues: Maturase K (504 aa).

Belongs to the intron maturase 2 family. MatK subfamily.

The protein localises to the plastid. Its subcellular location is the chloroplast. Its function is as follows. Usually encoded in the trnK tRNA gene intron. Probably assists in splicing its own and other chloroplast group II introns. The chain is Maturase K from Vauquelinia californica (Arizona rosewood).